A 362-amino-acid chain; its full sequence is 3-isopropylmalate dehydrogenase (362 aa).

Position 78 to 91 (78 to 91) interacts with NAD(+); the sequence is GPKWETLPPDEQPE. Substrate contacts are provided by Arg-99, Arg-109, Arg-138, and Asp-227. The Mg(2+) site is built by Asp-227, Asp-251, and Asp-255. 285-297 provides a ligand contact to NAD(+); the sequence is GSAPDIAGQGIAN.

This sequence belongs to the isocitrate and isopropylmalate dehydrogenases family. LeuB type 1 subfamily. In terms of assembly, homodimer. Mg(2+) is required as a cofactor. Requires Mn(2+) as cofactor.

The protein localises to the cytoplasm. The enzyme catalyses (2R,3S)-3-isopropylmalate + NAD(+) = 4-methyl-2-oxopentanoate + CO2 + NADH. Its pathway is amino-acid biosynthesis; L-leucine biosynthesis; L-leucine from 3-methyl-2-oxobutanoate: step 3/4. Functionally, catalyzes the oxidation of 3-carboxy-2-hydroxy-4-methylpentanoate (3-isopropylmalate) to 3-carboxy-4-methyl-2-oxopentanoate. The product decarboxylates to 4-methyl-2 oxopentanoate. This chain is 3-isopropylmalate dehydrogenase, found in Geobacter metallireducens (strain ATCC 53774 / DSM 7210 / GS-15).